Consider the following 176-residue polypeptide: dCTP deaminase (176 aa).

Residues 102–107 (RSTFAR) and aspartate 118 contribute to the dCTP site. Residue glutamate 128 is the Proton donor/acceptor of the active site. DCTP-binding residues include tyrosine 160, lysine 166, and glutamine 167.

The protein belongs to the dCTP deaminase family. Homotrimer.

The catalysed reaction is dCTP + H2O + H(+) = dUTP + NH4(+). The protein operates within pyrimidine metabolism; dUMP biosynthesis; dUMP from dCTP (dUTP route): step 1/2. In terms of biological role, catalyzes the deamination of dCTP to dUTP. The polypeptide is dCTP deaminase (Staphylothermus marinus (strain ATCC 43588 / DSM 3639 / JCM 9404 / F1)).